The chain runs to 519 residues: Histidine--tRNA ligase (519 aa).

The protein belongs to the class-II aminoacyl-tRNA synthetase family. As to quaternary structure, homodimer.

It localises to the cytoplasm. It carries out the reaction tRNA(His) + L-histidine + ATP = L-histidyl-tRNA(His) + AMP + diphosphate + H(+). The protein is Histidine--tRNA ligase of Rhodopseudomonas palustris (strain BisB18).